The following is a 595-amino-acid chain: Protein halfway (595 aa).

2 disordered regions span residues 1 to 42 (MLLT…ADDE) and 64 to 98 (TGAATEATHSQPVVTAVPATSSTSTSTTVPAPLLP). N-linked (GlcNAc...) asparagine glycans are attached at residues asparagine 250 and asparagine 255. The region spanning 347–402 (ESTKRCMTKCPVIPNYGSCKCRFESIMIIQDDQSKPKCHVDCSNLGLVELPPRLPD) is the LRRNT domain. LRR repeat units follow at residues 403 to 424 (NTFVLNITNNKITSLGDHFQTN), 429 to 450 (NINRLVADNNQISSIYEFEGTK), and 454 to 475 (NFQRIYMRNNSLSKIPEYFLNN). The 50-residue stretch at 489–538 (NKLQCDCNSAKTLQNWLKERSTDIPDYMEIRCRNIPQSVIELQEAKLCQS) folds into the LRRCT domain.

In terms of biological role, has a role in the ecdysone induced cascade; probably indirect control of 'late' ecdysone genes. This is Protein halfway (hfw) from Drosophila pseudoobscura pseudoobscura (Fruit fly).